The following is a 393-amino-acid chain: Chorismate synthase (393 aa).

2 residues coordinate NADP(+): Arg-40 and Arg-46. FMN contacts are provided by residues 129-131 (RSS), 249-250 (QA), Gly-301, 316-320 (KPIPT), and Arg-342.

This sequence belongs to the chorismate synthase family. As to quaternary structure, homotetramer. Requires FMNH2 as cofactor.

It carries out the reaction 5-O-(1-carboxyvinyl)-3-phosphoshikimate = chorismate + phosphate. It participates in metabolic intermediate biosynthesis; chorismate biosynthesis; chorismate from D-erythrose 4-phosphate and phosphoenolpyruvate: step 7/7. Catalyzes the anti-1,4-elimination of the C-3 phosphate and the C-6 proR hydrogen from 5-enolpyruvylshikimate-3-phosphate (EPSP) to yield chorismate, which is the branch point compound that serves as the starting substrate for the three terminal pathways of aromatic amino acid biosynthesis. This reaction introduces a second double bond into the aromatic ring system. This Geobacter metallireducens (strain ATCC 53774 / DSM 7210 / GS-15) protein is Chorismate synthase.